The chain runs to 622 residues: Apical membrane antigen 1 (622 aa).

A signal peptide spans 1–24; the sequence is MRKLYCVLLLSAFEFTYMINFGRG. The Extracellular segment spans residues 25 to 546; it reads QNYWEHPYQK…EHKPTYDKMK (522 aa). Cystine bridges form between cysteine 149–cysteine 302, cysteine 217–cysteine 247, cysteine 263–cysteine 275, cysteine 320–cysteine 418, and cysteine 337–cysteine 409. N-linked (GlcNAc...) asparagine glycosylation occurs at asparagine 162. Residues asparagine 286, asparagine 371, asparagine 421, asparagine 422, and asparagine 499 are each glycosylated (N-linked (GlcNAc...) asparagine). 3 disulfides stabilise this stretch: cysteine 443–cysteine 502, cysteine 490–cysteine 507, and cysteine 492–cysteine 509. The helical transmembrane segment at 547–567 threads the bilayer; the sequence is IIIASSAAVAVLATILMVYLY. The Cytoplasmic portion of the chain corresponds to 568-622; it reads KRKGNAEKYDKMDEPQDYGKSNSRNDEMLDPEASFWGEEKRASHTTPVLMEKPYY. A disordered region spans residues 577–607; sequence DKMDEPQDYGKSNSRNDEMLDPEASFWGEEK.

It belongs to the apicomplexan parasites AMA1 family.

It is found in the membrane. Involved in parasite invasion of erythrocytes. This chain is Apical membrane antigen 1 (AMA-1), found in Plasmodium falciparum (isolate 7G8).